A 476-amino-acid chain; its full sequence is Sulfate adenylyltransferase subunit 1 (476 aa).

A tr-type G domain is found at 24–243; sequence KSLLRFLTCG…VDVEKEKEAG (220 aa). Residues 33-40 form a G1 region; the sequence is GSVDDGKS. Residue 33–40 coordinates GTP; the sequence is GSVDDGKS. Positions 91 to 95 are G2; it reads GITID. A G3 region spans residues 112–115; it reads DTPG. Residues 112–116 and 167–170 each bind GTP; these read DTPGH and NKMD. The segment at 167-170 is G4; the sequence is NKMD. A G5 region spans residues 205 to 207; it reads SAL.

This sequence belongs to the TRAFAC class translation factor GTPase superfamily. Classic translation factor GTPase family. CysN/NodQ subfamily. Heterodimer composed of CysD, the smaller subunit, and CysN.

The catalysed reaction is sulfate + ATP + H(+) = adenosine 5'-phosphosulfate + diphosphate. It functions in the pathway sulfur metabolism; hydrogen sulfide biosynthesis; sulfite from sulfate: step 1/3. Its function is as follows. With CysD forms the ATP sulfurylase (ATPS) that catalyzes the adenylation of sulfate producing adenosine 5'-phosphosulfate (APS) and diphosphate, the first enzymatic step in sulfur assimilation pathway. APS synthesis involves the formation of a high-energy phosphoric-sulfuric acid anhydride bond driven by GTP hydrolysis by CysN coupled to ATP hydrolysis by CysD. This chain is Sulfate adenylyltransferase subunit 1, found in Vibrio vulnificus (strain YJ016).